Here is a 251-residue protein sequence, read N- to C-terminus: Probable transcriptional regulatory protein Caul_0780 (251 aa).

Belongs to the TACO1 family.

It localises to the cytoplasm. This is Probable transcriptional regulatory protein Caul_0780 from Caulobacter sp. (strain K31).